Here is a 331-residue protein sequence, read N- to C-terminus: Ornithine carbamoyltransferase (331 aa).

Carbamoyl phosphate contacts are provided by residues 55–58 (STRT), Gln-82, Arg-106, and 133–136 (HPTQ). Residues Asn-166, Asp-230, and 234–235 (SM) contribute to the L-ornithine site. Residues 272–273 (CL) and Arg-317 each bind carbamoyl phosphate.

Belongs to the aspartate/ornithine carbamoyltransferase superfamily. OTCase family.

Its subcellular location is the cytoplasm. It catalyses the reaction carbamoyl phosphate + L-ornithine = L-citrulline + phosphate + H(+). The protein operates within amino-acid biosynthesis; L-arginine biosynthesis; L-arginine from L-ornithine and carbamoyl phosphate: step 1/3. Its function is as follows. Reversibly catalyzes the transfer of the carbamoyl group from carbamoyl phosphate (CP) to the N(epsilon) atom of ornithine (ORN) to produce L-citrulline. This is Ornithine carbamoyltransferase from Neisseria meningitidis serogroup C / serotype 2a (strain ATCC 700532 / DSM 15464 / FAM18).